A 302-amino-acid chain; its full sequence is Sulfate adenylyltransferase subunit 2 (302 aa).

Belongs to the PAPS reductase family. CysD subfamily. In terms of assembly, heterodimer composed of CysD, the smaller subunit, and CysN.

It carries out the reaction sulfate + ATP + H(+) = adenosine 5'-phosphosulfate + diphosphate. The protein operates within sulfur metabolism; hydrogen sulfide biosynthesis; sulfite from sulfate: step 1/3. Functionally, with CysN forms the ATP sulfurylase (ATPS) that catalyzes the adenylation of sulfate producing adenosine 5'-phosphosulfate (APS) and diphosphate, the first enzymatic step in sulfur assimilation pathway. APS synthesis involves the formation of a high-energy phosphoric-sulfuric acid anhydride bond driven by GTP hydrolysis by CysN coupled to ATP hydrolysis by CysD. This chain is Sulfate adenylyltransferase subunit 2, found in Xanthomonas campestris pv. campestris (strain 8004).